The chain runs to 193 residues: MSVIPMVVEQTARGERSYDIYSRLLKERVIFLGGEVEDRMANLIVAQLLFLESEDPEKDINIYINSPGGSVTAGMAIYDTMQFVKPDIRTLCVGQACSMGAFLLAGGTAGKRIALPSARVMIHQPLGGFRGQASDIQIHAQEILKIKQTLNERLAFHTGQTIERIERDTDRDNFMSAEEAKAYGLVDEVLASR.

Residue Ser98 is the Nucleophile of the active site. Residue His123 is part of the active site.

This sequence belongs to the peptidase S14 family. As to quaternary structure, fourteen ClpP subunits assemble into 2 heptameric rings which stack back to back to give a disk-like structure with a central cavity, resembling the structure of eukaryotic proteasomes.

The protein localises to the cytoplasm. The enzyme catalyses Hydrolysis of proteins to small peptides in the presence of ATP and magnesium. alpha-casein is the usual test substrate. In the absence of ATP, only oligopeptides shorter than five residues are hydrolyzed (such as succinyl-Leu-Tyr-|-NHMec, and Leu-Tyr-Leu-|-Tyr-Trp, in which cleavage of the -Tyr-|-Leu- and -Tyr-|-Trp bonds also occurs).. Its function is as follows. Cleaves peptides in various proteins in a process that requires ATP hydrolysis. Has a chymotrypsin-like activity. Plays a major role in the degradation of misfolded proteins. This Pasteurella multocida (strain Pm70) protein is ATP-dependent Clp protease proteolytic subunit.